We begin with the raw amino-acid sequence, 202 residues long: MPIGVPKVPFRSPGEEDAVWVDVYNRLHRERLLFLGQEVDSEISNQLVGLMVYLSIEDDTRDLYLFINSPGGWVIPGIAIYDTMQFVPPDVHTICMGLAASMGSFILVGGEITKRLAFPHARVMIHQPASSFYEAPTGEFILEAEELLKLRETLTRVYVQRTGNPLWVISEDMERDVFMSATEAQAHGIVDVVAVENTGDFT.

Residue Ser101 is the Nucleophile of the active site. His126 is a catalytic residue.

The protein belongs to the peptidase S14 family. As to quaternary structure, component of the chloroplastic Clp protease core complex.

The protein localises to the plastid. It is found in the chloroplast stroma. It carries out the reaction Hydrolysis of proteins to small peptides in the presence of ATP and magnesium. alpha-casein is the usual test substrate. In the absence of ATP, only oligopeptides shorter than five residues are hydrolyzed (such as succinyl-Leu-Tyr-|-NHMec, and Leu-Tyr-Leu-|-Tyr-Trp, in which cleavage of the -Tyr-|-Leu- and -Tyr-|-Trp bonds also occurs).. Its function is as follows. Cleaves peptides in various proteins in a process that requires ATP hydrolysis. Has a chymotrypsin-like activity. Plays a major role in the degradation of misfolded proteins. This is ATP-dependent Clp protease proteolytic subunit from Drimys granadensis.